The chain runs to 336 residues: tRNA N6-adenosine threonylcarbamoyltransferase (336 aa).

Fe cation contacts are provided by His-115 and His-119. Residues 137–141, Asp-170, Gly-183, Asp-187, and Asn-276 each bind substrate; that span reads LVSGG. Asp-302 is a Fe cation binding site.

Belongs to the KAE1 / TsaD family. Requires Fe(2+) as cofactor.

It is found in the cytoplasm. The enzyme catalyses L-threonylcarbamoyladenylate + adenosine(37) in tRNA = N(6)-L-threonylcarbamoyladenosine(37) in tRNA + AMP + H(+). In terms of biological role, required for the formation of a threonylcarbamoyl group on adenosine at position 37 (t(6)A37) in tRNAs that read codons beginning with adenine. Is involved in the transfer of the threonylcarbamoyl moiety of threonylcarbamoyl-AMP (TC-AMP) to the N6 group of A37, together with TsaE and TsaB. TsaD likely plays a direct catalytic role in this reaction. This chain is tRNA N6-adenosine threonylcarbamoyltransferase, found in Streptococcus suis (strain 98HAH33).